The following is a 582-amino-acid chain: ATP-dependent lipid A-core flippase (582 aa).

Transmembrane regions (helical) follow at residues 25–45 (WFML…QAGA), 64–84 (VLIV…GQFM), 142–162 (AIIV…FLLW), 165–185 (WKLT…MNIT), and 253–273 (VIVQ…YIHL). The ABC transmembrane type-1 domain occupies 29 to 309 (VISVIGYALY…LTDVNVKVQR (281 aa)). Positions 342 to 577 (IDFEGVSFGY…NGLYTQMYRM (236 aa)) constitute an ABC transporter domain. ATP is bound at residue 375–382 (GRSGAGKS).

It belongs to the ABC transporter superfamily. Lipid exporter (TC 3.A.1.106) family. Homodimer.

Its subcellular location is the cell inner membrane. It carries out the reaction ATP + H2O + lipid A-core oligosaccharideSide 1 = ADP + phosphate + lipid A-core oligosaccharideSide 2.. Involved in lipopolysaccharide (LPS) biosynthesis. Translocates lipid A-core from the inner to the outer leaflet of the inner membrane. Transmembrane domains (TMD) form a pore in the inner membrane and the ATP-binding domain (NBD) is responsible for energy generation. In Alcanivorax borkumensis (strain ATCC 700651 / DSM 11573 / NCIMB 13689 / SK2), this protein is ATP-dependent lipid A-core flippase.